The sequence spans 299 residues: UPF0282 protein TK1681 (299 aa).

It belongs to the UPF0282 family.

This is UPF0282 protein TK1681 from Thermococcus kodakarensis (strain ATCC BAA-918 / JCM 12380 / KOD1) (Pyrococcus kodakaraensis (strain KOD1)).